Here is a 585-residue protein sequence, read N- to C-terminus: Involucrin (585 aa).

The span at 1–15 (MSQQHTLPVTLSPAL) shows a compositional bias: polar residues. The disordered stretch occupies residues 1 to 132 (MSQQHTLPVT…LEEEKKLLDQ (132 aa)). Glutamine 79 is lipidated: Omega-hydroxyceramide glutamate ester. A compositionally biased stretch (basic and acidic residues) spans 92–115 (WEQHEEYQKAENPEQQLKQEKTQR). 2 omega-hydroxyceramide glutamate ester lipidation sites follow: glutamine 118 and glutamine 133. A disordered region spans residues 149–540 (KEQLLELPEQ…KDLEQQKGQL (392 aa)). 23 tandem repeats follow at residues 153-162 (LELPEQQEGH), 163-172 (LKHLEQQEGQ), 173-182 (LKHPEQQEGQ), 183-192 (LELPEQQEGQ), 193-202 (LELPEQQEGQ), 203-212 (LELPEQQEGQ), 213-222 (LELPEQQEGQ), 223-232 (LELPEQQEGQ), 233-242 (LELPQQQEGQ), 243-252 (LELSEQQEGQ), 253-262 (LELSEQQEGQ), 263-272 (LKHLEHQEGQ), 273-282 (LEVPEEQMGQ), 283-292 (LKYLEQQEGQ), 293-302 (LKHLDQQEKQ), 303-312 (PELPEQQMGQ), 313-322 (LKHLEQQEGQ), 323-332 (PKHLEQQEGQ), 333-342 (LEQLEEQEGQ), 343-352 (LKHLEQQEGQ), 353-362 (LEHLEHQEGQ), 363-372 (LGLPEQQVLQ), and 373-382 (LKQLEKQQGQ). The interval 153-542 (LELPEQQEGH…LEQQKGQLEQ (390 aa)) is 39 X 10 AA approximate tandem repeats of [LP]-[EKG]-[LHVYQEK]-[PLSQE]-[EQDV]-[QHEKRGA]-Q-[EMVQLP]-[GKLE]-[QHVNLD]. A compositionally biased stretch (basic and acidic residues) spans 159 to 178 (QEGHLKHLEQQEGQLKHPEQ). The segment covering 179–261 (QEGQLELPEQ…QLELSEQQEG (83 aa)) has biased composition (low complexity). Positions 262–271 (QLKHLEHQEG) are enriched in basic and acidic residues. 3 stretches are compositionally biased toward basic and acidic residues: residues 292–304 (QLKH…KQPE), 314–328 (KHLE…HLEQ), and 341–360 (GQLK…EHQE). The segment covering 361–383 (GQLGLPEQQVLQLKQLEKQQGQP) has biased composition (low complexity). The stretch at 383-392 (PKHLEEEEGQ) is one 24; approximate repeat. Basic and acidic residues predominate over residues 384 to 393 (KHLEEEEGQL). Repeat copies occupy residues 393-402 (LKHLVQQEGQ), 403-412 (LKHLVQQEGQ), 413-422 (LEQQERQVEH), 423-432 (LEQQVGQLKH), 433-442 (LEEQEGQLKH), 443-452 (LEQQQGQLEV), 453-462 (PEQQVGQPKN), 463-472 (LEQEEKQLEL), 473-482 (PEQQEGQVKH), 483-492 (LEKQEAQLEL), and 493-502 (PEQQVGQPKH). 2 stretches are compositionally biased toward basic and acidic residues: residues 415–424 (QQERQVEHLE) and 431–444 (KHLE…KHLE). The span at 445 to 462 (QQQGQLEVPEQQVGQPKN) shows a compositional bias: low complexity. A compositionally biased stretch (basic and acidic residues) spans 479 to 488 (QVKHLEKQEA). Residue glutamine 496 forms an Isoglutamyl lysine isopeptide (Gln-Lys) (interchain with K-? in other proteins) linkage. The segment covering 501–535 (KHLEQQEKHLEHPEQQDGQLKHLEQQEGQLKDLEQ) has biased composition (basic and acidic residues). The 36; approximate repeat unit spans residues 503-512 (LEQQEKHLEH). Repeat copies occupy residues 513–522 (PEQQDGQLKH) and 523–532 (LEQQEGQLKD). The stretch at 533 to 542 (LEQQKGQLEQ) is one 39; approximate repeat.

This sequence belongs to the involucrin family. As to quaternary structure, directly or indirectly cross-linked to cornifelin (CNFN). Substrate of transglutaminase. Some glutamines and lysines are cross-linked to other involucrin molecules, to other proteins such as keratin, desmoplakin, periplakin and envoplakin, and to lipids like omega-hydroxyceramide. In terms of tissue distribution, keratinocytes of epidermis and other stratified squamous epithelia.

The protein resides in the cytoplasm. In terms of biological role, part of the insoluble cornified cell envelope (CE) of stratified squamous epithelia. This chain is Involucrin (IVL), found in Homo sapiens (Human).